We begin with the raw amino-acid sequence, 442 residues long: UDP-N-acetylmuramate--L-alanine ligase (442 aa).

ATP is bound at residue 109 to 115 (GAHGKTS).

This sequence belongs to the MurCDEF family.

It localises to the cytoplasm. It carries out the reaction UDP-N-acetyl-alpha-D-muramate + L-alanine + ATP = UDP-N-acetyl-alpha-D-muramoyl-L-alanine + ADP + phosphate + H(+). Its pathway is cell wall biogenesis; peptidoglycan biosynthesis. Its function is as follows. Cell wall formation. The sequence is that of UDP-N-acetylmuramate--L-alanine ligase from Streptococcus pyogenes serotype M49 (strain NZ131).